The primary structure comprises 701 residues: Glycine--tRNA ligase beta subunit (701 aa).

Belongs to the class-II aminoacyl-tRNA synthetase family. As to quaternary structure, tetramer of two alpha and two beta subunits.

Its subcellular location is the cytoplasm. It catalyses the reaction tRNA(Gly) + glycine + ATP = glycyl-tRNA(Gly) + AMP + diphosphate. In Bradyrhizobium sp. (strain BTAi1 / ATCC BAA-1182), this protein is Glycine--tRNA ligase beta subunit.